Here is a 621-residue protein sequence, read N- to C-terminus: Complex I assembly factor ACAD9, mitochondrial (621 aa).

The N-terminal 37 residues, 1-37 (MSGCGLFLRTTAAARACRGLVVSTANRRLLRTSPPVR), are a transit peptide targeting the mitochondrion. K41 is subject to N6-acetyllysine. K92 is subject to N6-succinyllysine. Residue E426 is the Proton acceptor of the active site. At T478 the chain carries Phosphothreonine. K521 is subject to N6-acetyllysine; alternate. At K521 the chain carries N6-succinyllysine; alternate.

It belongs to the acyl-CoA dehydrogenase family. As to quaternary structure, homodimer. Interacts with NDUFAF1 and ECSIT. Part of the mitochondrial complex I assembly/MCIA complex that comprises at least the core subunits TMEM126B, NDUFAF1, ECSIT and ACAD9 and complement subunits such as COA1 and TMEM186. Interacts with TMEM70 and TMEM242. The cofactor is FAD. In terms of tissue distribution, ubiquitously expressed in most normal human tissues and cancer cell lines with high level of expression in heart, skeletal muscles, brain, kidney and liver. In the cerebellum uniquely expressed in the granular layer (at protein level).

It is found in the mitochondrion inner membrane. It carries out the reaction eicosanoyl-CoA + oxidized [electron-transfer flavoprotein] + H(+) = (2E)-eicosenoyl-CoA + reduced [electron-transfer flavoprotein]. It catalyses the reaction octadecanoyl-CoA + oxidized [electron-transfer flavoprotein] + H(+) = (2E)-octadecenoyl-CoA + reduced [electron-transfer flavoprotein]. The catalysed reaction is oxidized [electron-transfer flavoprotein] + hexadecanoyl-CoA + H(+) = (2E)-hexadecenoyl-CoA + reduced [electron-transfer flavoprotein]. The enzyme catalyses decanoyl-CoA + oxidized [electron-transfer flavoprotein] + H(+) = (2E)-decenoyl-CoA + reduced [electron-transfer flavoprotein]. It carries out the reaction nonanoyl-CoA + oxidized [electron-transfer flavoprotein] + H(+) = (2E)-nonenoyl-CoA + reduced [electron-transfer flavoprotein]. It catalyses the reaction pentadecanoyl-CoA + oxidized [electron-transfer flavoprotein] + H(+) = (2E)-pentadecenoyl-CoA + reduced [electron-transfer flavoprotein]. The catalysed reaction is undecanoyl-CoA + oxidized [electron-transfer flavoprotein] + H(+) = trans-2-undecenoyl-CoA + reduced [electron-transfer flavoprotein]. The enzyme catalyses (9Z)-hexadecenoyl-CoA + oxidized [electron-transfer flavoprotein] + H(+) = (2E,9Z)-hexadecadienoyl-CoA + reduced [electron-transfer flavoprotein]. It carries out the reaction heptadecanoyl-CoA + oxidized [electron-transfer flavoprotein] + H(+) = trans-2-heptadecenoyl-CoA + reduced [electron-transfer flavoprotein]. It catalyses the reaction (9E)-octadecenoyl-CoA + oxidized [electron-transfer flavoprotein] + H(+) = (2E,9E)-octadecadienoyl-CoA + reduced [electron-transfer flavoprotein]. The catalysed reaction is oxidized [electron-transfer flavoprotein] + (9Z)-octadecenoyl-CoA + H(+) = (2E,9Z)-octadecadienoyl-CoA + reduced [electron-transfer flavoprotein]. The enzyme catalyses (9Z,12Z)-octadecadienoyl-CoA + oxidized [electron-transfer flavoprotein] + H(+) = (2E,9Z,12Z)-octadecatrienoyl-CoA + reduced [electron-transfer flavoprotein]. It carries out the reaction (4Z,7Z,10Z,13Z,16Z,19Z)-docosahexaenoyl-CoA + oxidized [electron-transfer flavoprotein] + H(+) = (2E,4Z,7Z,10Z,13Z,16Z,19Z)-docosaheptaenoyl-CoA + reduced [electron-transfer flavoprotein]. It catalyses the reaction tetradecanoyl-CoA + oxidized [electron-transfer flavoprotein] + H(+) = (2E)-tetradecenoyl-CoA + reduced [electron-transfer flavoprotein]. Functionally, as part of the MCIA complex, primarily participates in the assembly of the mitochondrial complex I and therefore plays a role in oxidative phosphorylation. This moonlighting protein also has a dehydrogenase activity toward a broad range of substrates with greater specificity for long-chain unsaturated acyl-CoAs. However, in vivo, it does not seem to play a primary role in fatty acid oxidation. In addition, the function in complex I assembly is independent of the dehydrogenase activity of the protein. The chain is Complex I assembly factor ACAD9, mitochondrial from Homo sapiens (Human).